Reading from the N-terminus, the 249-residue chain is NADH-quinone oxidoreductase subunit C (249 aa).

This sequence belongs to the complex I 30 kDa subunit family. As to quaternary structure, NDH-1 is composed of 14 different subunits. Subunits NuoB, C, D, E, F, and G constitute the peripheral sector of the complex.

It is found in the cell inner membrane. It catalyses the reaction a quinone + NADH + 5 H(+)(in) = a quinol + NAD(+) + 4 H(+)(out). In terms of biological role, NDH-1 shuttles electrons from NADH, via FMN and iron-sulfur (Fe-S) centers, to quinones in the respiratory chain. The immediate electron acceptor for the enzyme in this species is believed to be ubiquinone. Couples the redox reaction to proton translocation (for every two electrons transferred, four hydrogen ions are translocated across the cytoplasmic membrane), and thus conserves the redox energy in a proton gradient. The chain is NADH-quinone oxidoreductase subunit C from Xylella fastidiosa (strain M12).